The chain runs to 161 residues: Nucleotide-binding protein Ajs_2750 (161 aa).

This sequence belongs to the YajQ family.

Functionally, nucleotide-binding protein. The chain is Nucleotide-binding protein Ajs_2750 from Acidovorax sp. (strain JS42).